The sequence spans 513 residues: ATP synthase subunit alpha (513 aa).

Gly170 to Thr177 contacts ATP.

The protein belongs to the ATPase alpha/beta chains family. F-type ATPases have 2 components, CF(1) - the catalytic core - and CF(0) - the membrane proton channel. CF(1) has five subunits: alpha(3), beta(3), gamma(1), delta(1), epsilon(1). CF(0) has three main subunits: a(1), b(2) and c(9-12). The alpha and beta chains form an alternating ring which encloses part of the gamma chain. CF(1) is attached to CF(0) by a central stalk formed by the gamma and epsilon chains, while a peripheral stalk is formed by the delta and b chains.

The protein resides in the cell inner membrane. It catalyses the reaction ATP + H2O + 4 H(+)(in) = ADP + phosphate + 5 H(+)(out). In terms of biological role, produces ATP from ADP in the presence of a proton gradient across the membrane. The alpha chain is a regulatory subunit. In Teredinibacter turnerae (strain ATCC 39867 / T7901), this protein is ATP synthase subunit alpha.